A 417-amino-acid polypeptide reads, in one-letter code: Inhibitor of growth protein 3 (417 aa).

Disordered stretches follow at residues 126 to 165, 177 to 198, and 284 to 320; these read LDTP…SEKK, SDAS…STNN, and QTLT…SSSL. A compositionally biased stretch (basic residues) spans 136–152; it reads HHVHSHSLGEKRKHNPS. Residues 156–165 are compositionally biased toward basic and acidic residues; it reads STTDHVSEKK. Residues 177–187 are compositionally biased toward polar residues; the sequence is SDASKENTAGC. Composition is skewed to low complexity over residues 189-198, 284-294, and 303-320; these read NNLSSSSTNN, QTLTSSATTDS, and NNKS…SSSL. A PHD-type zinc finger spans residues 359 to 408; the sequence is PRYCICNQVSYGEMVGCDNQDCPIEWFHYGCVGLSEAPKGKWYCPQCTAA. Zn(2+) contacts are provided by Cys-362, Cys-364, Cys-375, Cys-380, His-386, Cys-389, Cys-402, and Cys-405.

Belongs to the ING family. As to quaternary structure, interacts with H3K4me3 and to a lesser extent with H3K4me2. Component of the NuA4 histone acetyltransferase complex.

Its subcellular location is the nucleus. Functionally, component of the NuA4 histone acetyltransferase (HAT) complex which is involved in transcriptional activation of select genes principally by acetylation of nucleosomal histone H4 and H2A. This modification may both alter nucleosome - DNA interactions and promote interaction of the modified histones with other proteins which positively regulate transcription. NuA4 may also play a direct role in DNA repair when directly recruited to sites of DNA damage. The chain is Inhibitor of growth protein 3 (ing3) from Xenopus tropicalis (Western clawed frog).